Reading from the N-terminus, the 185-residue chain is Bcl-2-modifying factor (185 aa).

The tract at residues 1 to 28 (MEPPQCVEELEDDVFQPEDGEPGTQPGS) is disordered. The segment covering 8 to 21 (EELEDDVFQPEDGE) has biased composition (acidic residues). Residues 67–75 (DKATQTLSP) form an interaction with DLC2 region. A BH3 motif is present at residues 134-148 (IARKLQCIADQFHRL).

This sequence belongs to the Bcl-2 family. As to quaternary structure, interacts with MCL1, BCL2, BCL2L1/BCL-Xl, BCL2A1 and BCL2L2/BCL-w. Interacts with the myosin V actin motor complex through its binding to DLC2.

Its function is as follows. May play a role in apoptosis. The polypeptide is Bcl-2-modifying factor (Bmf) (Rattus norvegicus (Rat)).